The sequence spans 624 residues: Cilia- and flagella-associated protein 206 (624 aa).

The protein belongs to the CFAP206 family.

The protein resides in the cytoplasm. It is found in the cytoskeleton. The protein localises to the cilium axoneme. Its subcellular location is the cilium basal body. Its function is as follows. Essential for sperm motility and is involved in the regulation of the beating frequency of motile cilia on the epithelial cells of the respiratory tract. Required for the establishment of radial spokes in sperm flagella. The chain is Cilia- and flagella-associated protein 206 (cfap206) from Danio rerio (Zebrafish).